The sequence spans 492 residues: Propanoyl-CoA:succinate CoA transferase (492 aa).

260–264 (GVGNI) serves as a coordination point for CoA. Glu286 (5-glutamyl coenzyme A thioester intermediate) is an active-site residue. The CoA site is built by Asn376 and Gly380.

This sequence belongs to the acetyl-CoA hydrolase/transferase family.

It carries out the reaction propanoyl-CoA + succinate = propanoate + succinyl-CoA. In terms of biological role, catalyzes the transfer of coenzyme A from propionyl-CoA to succinate. Could be part of a pathway that converts succinate to propionate. This Escherichia coli (strain K12) protein is Propanoyl-CoA:succinate CoA transferase.